A 471-amino-acid polypeptide reads, in one-letter code: Glutamate--tRNA ligase (471 aa).

The short motif at 9–19 (PSPTGYLHVGG) is the 'HIGH' region element. Residues cysteine 98, cysteine 100, cysteine 125, and histidine 127 each coordinate Zn(2+). The short motif at 237 to 241 (KLSKR) is the 'KMSKS' region element. Residue lysine 240 participates in ATP binding.

The protein belongs to the class-I aminoacyl-tRNA synthetase family. Glutamate--tRNA ligase type 1 subfamily. In terms of assembly, monomer. Requires Zn(2+) as cofactor.

It is found in the cytoplasm. It carries out the reaction tRNA(Glu) + L-glutamate + ATP = L-glutamyl-tRNA(Glu) + AMP + diphosphate. Catalyzes the attachment of glutamate to tRNA(Glu) in a two-step reaction: glutamate is first activated by ATP to form Glu-AMP and then transferred to the acceptor end of tRNA(Glu). The polypeptide is Glutamate--tRNA ligase (Escherichia coli O1:K1 / APEC).